We begin with the raw amino-acid sequence, 46 residues long: Large ribosomal subunit protein bL36 (46 aa).

This sequence belongs to the bacterial ribosomal protein bL36 family.

This Salmonella agona (strain SL483) protein is Large ribosomal subunit protein bL36.